A 144-amino-acid chain; its full sequence is Transcriptional regulator MraZ (144 aa).

SpoVT-AbrB domains follow at residues 5 to 47 (TYTP…PRAE) and 77 to 120 (TDEQ…DAQA).

It belongs to the MraZ family. As to quaternary structure, forms oligomers.

The protein localises to the cytoplasm. Its subcellular location is the nucleoid. The polypeptide is Transcriptional regulator MraZ (Mycolicibacterium vanbaalenii (strain DSM 7251 / JCM 13017 / BCRC 16820 / KCTC 9966 / NRRL B-24157 / PYR-1) (Mycobacterium vanbaalenii)).